Consider the following 392-residue polypeptide: Bifunctional enzyme Fae/Hps (392 aa).

The formaldehyde-activating enzyme stretch occupies residues 1–161; the sequence is MFQIGEALMG…EESNKSTHAI (161 aa). H17 acts as the Proton donor in catalysis. D19, L48, K66, T68, and Q83 together coordinate substrate. The tract at residues 162-392 is 3-hexulose-6-phosphate synthase; it reads MGFKVTRLWD…IDQFRVMTDF (231 aa).

It in the N-terminal section; belongs to the formaldehyde-activating enzyme family. The protein in the C-terminal section; belongs to the HPS/KGPDC family. HPS subfamily.

It carries out the reaction 5,6,7,8-tetrahydromethanopterin + formaldehyde = 5,10-methylenetetrahydromethanopterin + H2O. The catalysed reaction is D-ribulose 5-phosphate + formaldehyde = D-arabino-hex-3-ulose 6-phosphate. It participates in carbohydrate biosynthesis; D-ribose 5-phosphate biosynthesis. Catalyzes the condensation of formaldehyde with tetrahydromethanopterin (H(4)MPT) to 5,10-methylenetetrahydromethanopterin. Functionally, catalyzes the reversible formation of ribulose-5-phosphate and formaldehyde from 3-hexulose-6-phosphate. The protein is Bifunctional enzyme Fae/Hps of Methanosarcina mazei (strain ATCC BAA-159 / DSM 3647 / Goe1 / Go1 / JCM 11833 / OCM 88) (Methanosarcina frisia).